Consider the following 116-residue polypeptide: Large ribosomal subunit protein bL20 (116 aa).

This sequence belongs to the bacterial ribosomal protein bL20 family.

Binds directly to 23S ribosomal RNA and is necessary for the in vitro assembly process of the 50S ribosomal subunit. It is not involved in the protein synthesizing functions of that subunit. This Phocaeicola vulgatus (strain ATCC 8482 / DSM 1447 / JCM 5826 / CCUG 4940 / NBRC 14291 / NCTC 11154) (Bacteroides vulgatus) protein is Large ribosomal subunit protein bL20.